The following is a 1616-amino-acid chain: Protein P200 (1616 aa).

Disordered regions lie at residues 1 to 41 (MPKT…DKVE), 878 to 909 (HFQPDVQPEQTPQEAKFDSPVEIPQESSQAEF), 931 to 975 (QQLE…LDQN), 1004 to 1083 (DNVE…EPVD), 1100 to 1132 (FDKNQTQTEGLEEPQVSSEAEVVDQTTTDTVGE), and 1159 to 1433 (ISEP…SEEE). Residues 891-1389 (EAKFDSPVEI…QEAKFDSPVE (499 aa)) form a 2 X 26 AA repeats region. A compositionally biased stretch (low complexity) spans 938–952 (EETVVTPTEVTAFEP). Basic and acidic residues-rich tracts occupy residues 1012–1029 (QPKETEAEITFDETKELQ) and 1059–1081 (VFEKPQLETQTEKILEEEPKSEP). A run of 2 repeats spans residues 1161–1186 (EPQVEQQPGEAVFEPSAEAKFDSPVE) and 1205–1236 (EIQPVESQPEATFDTVQPEQTPQEAKFDSPVE). Composition is skewed to polar residues over residues 1200 to 1227 (VQTQPEIQPVESQPEATFDTVQPEQTPQ) and 1242 to 1251 (EFSSEPTQQH). Residues 1205–1389 (EIQPVESQPE…QEAKFDSPVE (185 aa)) form a 2 X 32 AA repeats region. A compositionally biased stretch (acidic residues) spans 1256 to 1270 (ASFDEPNYDFDEPNY). Over residues 1276–1285 (SYDSDLQPSE) the composition is skewed to polar residues. Over residues 1288 to 1302 (YDVDEPNYDFDEPNY) the composition is skewed to acidic residues. The segment covering 1309–1323 (SEPQFEPQVEQQPGE) has biased composition (low complexity). 2 consecutive repeat copies span residues 1310–1339 (EPQFEPQVEQQPGEAVFEPSAEAKFDSPVE) and 1358–1389 (EIQPVESQPEATFDTVQPEQTPQEAKFDSPVE). Positions 1353–1380 (VQTQPEIQPVESQPEATFDTVQPEQTPQ) are enriched in polar residues. The span at 1392-1406 (QEPQVSSEPEVVVQP) shows a compositional bias: low complexity. The span at 1416 to 1433 (VLEEPQADEIQPEASEEE) shows a compositional bias: acidic residues.

In terms of biological role, could be an accessory structural component in cytadherence. The chain is Protein P200 from Mycoplasma genitalium (strain ATCC 33530 / DSM 19775 / NCTC 10195 / G37) (Mycoplasmoides genitalium).